A 261-amino-acid polypeptide reads, in one-letter code: Carbonic anhydrase 1 (261 aa).

A2 carries the N-acetylalanine modification. Positions 4–261 constitute an Alpha-carbonic anhydrase domain; that stretch reads SDWGYDSPNG…LKGRTVRAFF (258 aa). The active-site Proton donor/acceptor is the H65. Zn(2+) contacts are provided by H95, H97, and H120. Residues T200 and 200-201 contribute to the substrate site; that span reads TH.

It belongs to the alpha-carbonic anhydrase family. It depends on Zn(2+) as a cofactor.

The protein resides in the cytoplasm. The enzyme catalyses hydrogencarbonate + H(+) = CO2 + H2O. It catalyses the reaction urea = cyanamide + H2O. Inhibited by acetazolamide. Its function is as follows. Catalyzes the reversible hydration of carbon dioxide. Can hydrate cyanamide to urea. This chain is Carbonic anhydrase 1 (CA1), found in Equus caballus (Horse).